The chain runs to 533 residues: MKKNLKILVITGGVISGIGKGVTSASIARLFRYDFRVTPIKCDGYLNTDPGTINPVEHGEVFVLDDGGEVDMDFGHYERFLNLNAKSSWNITMGKIYKKILENERKGKYLGRTVQLIPHVTDEIKSTIFQIASSENSEMLIIEIGGTVGDMENILFIETVRQIRHEVGSGNIAFIHLTYVPSPVGINEQKSKPTQQSVKTLNKAGIFPDLIIARSSQVLTDQIRKKIAMFCNVESTSIIDNIDVSTIYEIPISFYKQGVHEILSSKLNIKVDPKIEELSRLVGIIKSNFFVPKKIINIAICGKYAELDDSYASIRESLVHVAANLDLLIKSTLIDSNDLNESCLKDFDGIIVPGGFGGKGYEGKIIAIKYARENNIPFLGICLGLQLAVIEFARNVCGILDADTEENLIKDKPLKNPVIHLLPEQKEIKDKGATMRLGGYPVILKKNTIAFKLYGQDRIIERFRHRYEVNNDYIDLFEKNGLIVSGFSSDFKIAKLIEIPKNKFFVACQFHPELITRIENPAKLFLGLIKACI.

The tract at residues 1–269 (MKKNLKILVI…HEILSSKLNI (269 aa)) is amidoligase domain. S16 provides a ligand contact to CTP. S16 is a binding site for UTP. ATP contacts are provided by residues 17-22 (GIGKGV) and D73. 2 residues coordinate Mg(2+): D73 and E143. CTP is bound by residues 150–152 (DME), 190–195 (KSKPTQ), and K226. UTP is bound by residues 190-195 (KSKPTQ) and K226. Positions 304-533 (YAELDDSYAS…LFLGLIKACI (230 aa)) constitute a Glutamine amidotransferase type-1 domain. G355 lines the L-glutamine pocket. The active-site Nucleophile; for glutamine hydrolysis is the C382. Residues 383-386 (LGLQ), E406, and R466 each bind L-glutamine. Active-site residues include H511 and E513.

The protein belongs to the CTP synthase family. In terms of assembly, homotetramer.

The catalysed reaction is UTP + L-glutamine + ATP + H2O = CTP + L-glutamate + ADP + phosphate + 2 H(+). It carries out the reaction L-glutamine + H2O = L-glutamate + NH4(+). It catalyses the reaction UTP + NH4(+) + ATP = CTP + ADP + phosphate + 2 H(+). It participates in pyrimidine metabolism; CTP biosynthesis via de novo pathway; CTP from UDP: step 2/2. With respect to regulation, allosterically activated by GTP, when glutamine is the substrate; GTP has no effect on the reaction when ammonia is the substrate. The allosteric effector GTP functions by stabilizing the protein conformation that binds the tetrahedral intermediate(s) formed during glutamine hydrolysis. Inhibited by the product CTP, via allosteric rather than competitive inhibition. Catalyzes the ATP-dependent amination of UTP to CTP with either L-glutamine or ammonia as the source of nitrogen. Regulates intracellular CTP levels through interactions with the four ribonucleotide triphosphates. The chain is CTP synthase from Borreliella afzelii (strain PKo) (Borrelia afzelii).